Reading from the N-terminus, the 406-residue chain is Renin (406 aa).

The first 23 residues, 1–23 (MDGWRRMPRWGLLLLLWGSCTFG), serve as a signal peptide directing secretion. The propeptide at 24-66 (LPTDTTTFKRIFLKRMPSIRESLKERGVDMARLGPEWSQPMKR) is activation peptide. An N-linked (GlcNAc...) asparagine glycan is attached at N71. Positions 86–403 (YYGEIGIGTP…DRRNNRIGFA (318 aa)) constitute a Peptidase A1 domain. D104 is a catalytic residue. C117 and C124 are joined by a disulfide. The N-linked (GlcNAc...) asparagine glycan is linked to N141. C283 and C287 are disulfide-bonded. D292 is an active-site residue. The cysteines at positions 325 and 362 are disulfide-linked.

This sequence belongs to the peptidase A1 family. As to quaternary structure, interacts with ATP6AP2.

The protein resides in the secreted. The protein localises to the membrane. It carries out the reaction Cleavage of Leu-|-Xaa bond in angiotensinogen to generate angiotensin I.. Its activity is regulated as follows. Interaction with ATP6AP2 results in a 5-fold increased efficiency in angiotensinogen processing. In terms of biological role, renin is a highly specific endopeptidase, whose only known function is to generate angiotensin I from angiotensinogen in the plasma, initiating a cascade of reactions that produce an elevation of blood pressure and increased sodium retention by the kidney. The protein is Renin (REN) of Macaca fascicularis (Crab-eating macaque).